The sequence spans 62 residues: Photosystem II reaction center protein Z (62 aa).

2 consecutive transmembrane segments (helical) span residues 8–28 and 41–61; these read AVFA…VVFA and FSGT…NSLI.

Belongs to the PsbZ family. In terms of assembly, PSII is composed of 1 copy each of membrane proteins PsbA, PsbB, PsbC, PsbD, PsbE, PsbF, PsbH, PsbI, PsbJ, PsbK, PsbL, PsbM, PsbT, PsbY, PsbZ, Psb30/Ycf12, at least 3 peripheral proteins of the oxygen-evolving complex and a large number of cofactors. It forms dimeric complexes.

Its subcellular location is the plastid. The protein localises to the chloroplast thylakoid membrane. Functionally, may control the interaction of photosystem II (PSII) cores with the light-harvesting antenna, regulates electron flow through the 2 photosystem reaction centers. PSII is a light-driven water plastoquinone oxidoreductase, using light energy to abstract electrons from H(2)O, generating a proton gradient subsequently used for ATP formation. The polypeptide is Photosystem II reaction center protein Z (Liriodendron tulipifera (Tuliptree)).